The following is a 239-amino-acid chain: MDKLLNKKIKVKQSNELTEAAYYLSLKAKRVLWLCLMQTYFTASVSEDDDEMAVLGDSTFKVKVADYQQIFQVSRNQAIKDVKEGVFELSRSAVIFYPKEGSFDCVARPWLTEAGSRSARGIWEIEFNHKLLRYIYGLTNQFTTYSLRDCGSLRNPRTIRLYESLAQFKSSGLWVTTHAWLNDRFLLPESQQKNLAELKRSFLDPALKQINEKTPLLAKYSIDDSGKFLFSIIDKQNPV.

The protein belongs to the initiator RepB protein family.

In terms of biological role, mutations in ORF 239 affects the incN plasmid pUC1 E.coli polA-independence but not its autonomous replication ability. This is an uncharacterized protein from Escherichia coli.